A 436-amino-acid polypeptide reads, in one-letter code: Eukaryotic peptide chain release factor subunit 1-1 (436 aa).

This sequence belongs to the eukaryotic release factor 1 family. In terms of assembly, heterodimer of two subunits, one of which binds GTP.

It is found in the cytoplasm. Directs the termination of nascent peptide synthesis (translation) in response to the termination codons UAA, UAG and UGA. Modulates plant growth and development. In Arabidopsis thaliana (Mouse-ear cress), this protein is Eukaryotic peptide chain release factor subunit 1-1 (ERF1-1).